The sequence spans 304 residues: Killer cell immunoglobulin-like receptor 2DS1 (304 aa).

Positions 1–21 (MSLTVVSMACVGFFLLQGAWP) are cleaved as a signal peptide. Residues 22–245 (HEGVHRKPSL…SETGNPRHLH (224 aa)) are Extracellular-facing. Ig-like C2-type domains lie at 42–107 (EETV…VTHS) and 142–205 (GENV…FRDS). C49 and C100 are oxidised to a cystine. N-linked (GlcNAc...) asparagine glycans are attached at residues N67, N84, N144, and N178. C149 and C198 are oxidised to a cystine. Residues 220-239 (VTGNPSNSWPSPTEPSSETG) are disordered. Positions 223 to 239 (NPSNSWPSPTEPSSETG) are enriched in low complexity. A helical membrane pass occupies residues 246–264 (VLIGTSVVKIPFTILLFFL). Residues 265 to 304 (LHRWCSDKKNAAVMDQEPAGNRTVNSEDSDEQDHQEVSYA) lie on the Cytoplasmic side of the membrane. The interval 280 to 304 (QEPAGNRTVNSEDSDEQDHQEVSYA) is disordered.

Belongs to the immunoglobulin superfamily. As to quaternary structure, interacts with the adapter protein TYROBP/DAP12; the interaction enhances KIR2DS1 stability at the cell surface. As to expression, expressed by NK cells.

The protein localises to the cell membrane. Receptor on natural killer (NK) cells for some HLA-C alleles such as w6. Does not inhibit the activity of NK cells. This Homo sapiens (Human) protein is Killer cell immunoglobulin-like receptor 2DS1.